Here is a 63-residue protein sequence, read N- to C-terminus: Large ribosomal subunit protein bL28 (63 aa).

It belongs to the bacterial ribosomal protein bL28 family.

In Brachyspira hyodysenteriae (strain ATCC 49526 / WA1), this protein is Large ribosomal subunit protein bL28.